The following is a 635-amino-acid chain: 1-deoxy-D-xylulose-5-phosphate synthase (635 aa).

Thiamine diphosphate-binding positions include His72 and 113 to 115 (GHA). A Mg(2+)-binding site is contributed by Asp144. Thiamine diphosphate contacts are provided by residues 145–146 (GA), Asn174, Tyr286, and Glu369. Mg(2+) is bound at residue Asn174.

This sequence belongs to the transketolase family. DXPS subfamily. As to quaternary structure, homodimer. The cofactor is Mg(2+). Thiamine diphosphate serves as cofactor.

It carries out the reaction D-glyceraldehyde 3-phosphate + pyruvate + H(+) = 1-deoxy-D-xylulose 5-phosphate + CO2. The protein operates within metabolic intermediate biosynthesis; 1-deoxy-D-xylulose 5-phosphate biosynthesis; 1-deoxy-D-xylulose 5-phosphate from D-glyceraldehyde 3-phosphate and pyruvate: step 1/1. Its function is as follows. Catalyzes the acyloin condensation reaction between C atoms 2 and 3 of pyruvate and glyceraldehyde 3-phosphate to yield 1-deoxy-D-xylulose-5-phosphate (DXP). This is 1-deoxy-D-xylulose-5-phosphate synthase from Acaryochloris marina (strain MBIC 11017).